Here is a 344-residue protein sequence, read N- to C-terminus: Serpentine receptor class alpha-27 (344 aa).

7 consecutive transmembrane segments (helical) span residues 28-48, 67-87, 128-148, 157-177, 203-223, 252-272, and 287-307; these read SIWMKINFVFVFILIFLTFYL, QILLMITLLNANLNQLIFLEI, GLLSALTFDRFFALYASTVYV, MLITVSIIVTVIVHIRTYGGV, AIFWIIMANCVLTIAVLLLNI, ICSVTSTQFVFLSFSTAALAI, and INIQYINGGVYGNLSIPVLIY.

The protein belongs to the nematode receptor-like protein sra family.

The protein resides in the membrane. The polypeptide is Serpentine receptor class alpha-27 (sra-27) (Caenorhabditis elegans).